Reading from the N-terminus, the 190-residue chain is NADH-quinone oxidoreductase subunit B (190 aa).

Residues cysteine 39, cysteine 40, cysteine 104, and cysteine 135 each contribute to the [4Fe-4S] cluster site.

It belongs to the complex I 20 kDa subunit family. In terms of assembly, NDH-1 is composed of 14 different subunits. Subunits NuoB, C, D, E, F, and G constitute the peripheral sector of the complex. The cofactor is [4Fe-4S] cluster.

It localises to the cell inner membrane. It catalyses the reaction a quinone + NADH + 5 H(+)(in) = a quinol + NAD(+) + 4 H(+)(out). Functionally, NDH-1 shuttles electrons from NADH, via FMN and iron-sulfur (Fe-S) centers, to quinones in the respiratory chain. The immediate electron acceptor for the enzyme in this species is believed to be a menaquinone. Couples the redox reaction to proton translocation (for every two electrons transferred, four hydrogen ions are translocated across the cytoplasmic membrane), and thus conserves the redox energy in a proton gradient. This is NADH-quinone oxidoreductase subunit B from Chlorobium chlorochromatii (strain CaD3).